Here is a 366-residue protein sequence, read N- to C-terminus: G kinase-anchoring protein 1 (366 aa).

An interaction with IRS1 region spans residues M1–D95. Disordered stretches follow at residues Q20–N110 and E147–L177. Residues S23, S25, and S27 each carry the phosphoserine modification. Polar residues predominate over residues T39 to T50. A coiled-coil region spans residues S47–A77. Residue S106 is modified to Phosphoserine; by PKG. Coiled-coil stretches lie at residues A128–V160 and E243–G353.

The protein belongs to the GKAP1 family. Interacts with PRKG1 and IRS1.

The protein resides in the golgi apparatus. Regulates insulin-dependent IRS1 tyrosine phosphorylation in adipocytes by modulating the availability of IRS1 to IR tyrosine kinase. Its association with IRS1 is required for insulin-induced translocation of SLC2A4 to the cell membrane. Involved in TNF-induced impairment of insulin-dependent IRS1 tyrosine phosphorylation. The protein is G kinase-anchoring protein 1 (GKAP1) of Homo sapiens (Human).